A 659-amino-acid polypeptide reads, in one-letter code: Serine/threonine-protein kinase StkP (659 aa).

Topologically, residues 1–342 (MIQIGKIFAG…PQAPKKHRFK (342 aa)) are cytoplasmic. The 262-residue stretch at 12–273 (YRIVKQIGRG…EMYVDLSSSL (262 aa)) folds into the Protein kinase domain. Residues 18–26 (IGRGGMADV) and Lys42 each bind ATP. Asp136 serves as the catalytic Proton acceptor. The helical transmembrane segment at 343–363 (MRYLILLASLVLVAASLIWIL) threads the bilayer. The Extracellular segment spans residues 364–659 (SRTPATIAIP…YKPKTTSATP (296 aa)). PASTA domains are found at residues 366–433 (TPAT…VVSS), 434–505 (GKQS…TVAK), 506–577 (KATT…TVAK), and 578–651 (KVTS…SIYK). Residues 541 to 561 (EEESSESEPGTIMKQSPGAGT) form a disordered region.

Belongs to the protein kinase superfamily. Ser/Thr protein kinase family. In terms of assembly, homodimer. StkP forms dimers through its transmembrane and extracellular domains. Dimer formation likely promotes autophosphorylation activity and might be necessary for targeting StkP substrate. In terms of processing, autophosphorylation occurs predominantly at the threonine residue and weakly at the serine residue. Dephosphorylated by PhpP.

It localises to the cell membrane. It catalyses the reaction L-seryl-[protein] + ATP = O-phospho-L-seryl-[protein] + ADP + H(+). The enzyme catalyses L-threonyl-[protein] + ATP = O-phospho-L-threonyl-[protein] + ADP + H(+). Protein kinase involved in signal transduction pathways that regulate various cellular processes. Likely senses intracellular peptidoglycan subunits present in the cell division septa of actively growing cells; thus, intracellular unlinked peptidoglycan may serve as the signal molecules that trigger StkP phosphorylation activity on a set of substrates. Plays a crucial role in the regulation of cell shape and cell division of S.pneumoniae through control of at least DivIVA activity. Is involved in competence triggering, and is required for the expression of the central competence operon comCDE. StkP also plays an important role for bacterial survival in vivo. Identified target substrates that are specifically phosphorylated by StkP in vivo, mainly on threonine residues, are DivIVA, GlmM, PpaC, MapZ, KhpB (also called EloR/Jag, shown in strains R6 and Rx1) and StkP itself. Autophosphorylated StkP is a substrate for the cotranscribed protein phosphatase PhpP (shown in the avirulent strain Rx / Cp1015); PhpP and StkP appear to constitute a functional signaling couple in vivo. The polypeptide is Serine/threonine-protein kinase StkP (stkP) (Streptococcus pneumoniae serotype 2 (strain D39 / NCTC 7466)).